The sequence spans 440 residues: C4-dicarboxylate transport protein (440 aa).

Transmembrane regions (helical) follow at residues 8 to 28, 40 to 60, 74 to 94, 147 to 167, 187 to 207, 221 to 241, 288 to 308, and 354 to 374; these read LYLQ…LFPA, FIKL…VTGI, LKGL…GLVV, GDIL…AALK, IVGF…AFTV, LIAC…GLVL, VVGL…SIYL, and AATL…LLGV. A disordered region spans residues 419–440; sequence DEVEPANDPEPPAMAAGLGLHG.

Belongs to the dicarboxylate/amino acid:cation symporter (DAACS) (TC 2.A.23) family.

The protein localises to the cell inner membrane. In terms of biological role, responsible for the transport of dicarboxylates such as succinate, fumarate, and malate from the periplasm across the membrane. This is C4-dicarboxylate transport protein from Anaeromyxobacter dehalogenans (strain 2CP-C).